The sequence spans 473 residues: MAAKTYNAGVKEYRQTYWTPEYTPKDTDLLACFKVTPQPGVAREEVAAAVAAESSTGTWTTVWTDLLTDLDYYKGRAYRIEDVPGDDTCFYAFVAYPIDLFEEGSIVNVLTSLVGNVFGFKALRALRLEDVRFPIAYVMTCGGPPHGIQVERDIMNKYGRPLLGCTIKPKLGLSAKNYGRAVYECLRGGLDFTKDDENVNSQPFMRWKQRFDFVQEATEKAQRETGERKGHYLNVTAPTPEEMYKRAEYAKEIGAPIIMHDYLTGGFCANTGLANWCRDNGMLLHIHRAMHAVLDRNPHHGIHFRVLTKCLRLSGGDHLHSGTVVGKLEGDRDATLGWIDIMRDDFIKEDRSRGIMFDQDFGSMPGVMPVASGGIHVWHMPALVTIFGDDSVLQFGGGTLGHPWGNAAGAAANRVALEACVEARNKGVAVEKEGKSILTEAATHSPELKIAMETWKEIKFEFDTVDKLDVAHK.

Substrate-binding residues include asparagine 116 and threonine 166. Lysine 168 acts as the Proton acceptor in catalysis. Residue lysine 170 participates in substrate binding. Residues lysine 194, aspartate 196, and glutamate 197 each contribute to the Mg(2+) site. N6-carboxylysine is present on lysine 194. Histidine 287 acts as the Proton acceptor in catalysis. Arginine 288, histidine 320, and serine 372 together coordinate substrate.

It belongs to the RuBisCO large chain family. Type I subfamily. In terms of assembly, heterohexadecamer of 8 large chains and 8 small chains. It depends on Mg(2+) as a cofactor.

The catalysed reaction is 2 (2R)-3-phosphoglycerate + 2 H(+) = D-ribulose 1,5-bisphosphate + CO2 + H2O. It catalyses the reaction D-ribulose 1,5-bisphosphate + O2 = 2-phosphoglycolate + (2R)-3-phosphoglycerate + 2 H(+). In terms of biological role, ruBisCO catalyzes two reactions: the carboxylation of D-ribulose 1,5-bisphosphate, the primary event in carbon dioxide fixation, as well as the oxidative fragmentation of the pentose substrate. Both reactions occur simultaneously and in competition at the same active site. This is Ribulose bisphosphate carboxylase large chain from Cupriavidus metallidurans (strain ATCC 43123 / DSM 2839 / NBRC 102507 / CH34) (Ralstonia metallidurans).